Here is a 299-residue protein sequence, read N- to C-terminus: Ribosomal protein uL3 glutamine methyltransferase (299 aa).

This sequence belongs to the protein N5-glutamine methyltransferase family. PrmB subfamily.

It carries out the reaction L-glutaminyl-[ribosomal protein uL3] + S-adenosyl-L-methionine = N(5)-methyl-L-glutaminyl-[ribosomal protein uL3] + S-adenosyl-L-homocysteine + H(+). Methylates large ribosomal subunit protein uL3 on a specific glutamine residue. The polypeptide is Ribosomal protein uL3 glutamine methyltransferase (Neisseria gonorrhoeae (strain ATCC 700825 / FA 1090)).